A 108-amino-acid chain; its full sequence is Circadian clock oscillator protein KaiB (108 aa).

This sequence belongs to the KaiB family. As to quaternary structure, homodimer, interacts with KaiC. The KaiABC complex composition changes during the circadian cycle to control KaiC phosphorylation. Complexes KaiC(6), KaiA(2-4):KaiC(6), KaiB(6):KaiC(6) and KaiC(6):KaiB(6):KaiA(12) are among the most important forms, many form cooperatively. Undergoes a major conformational rearrangment; in the free state forms homotetramers as a dimer of dimers. When bound to the CI domain of KaiC switches to a monomeric thioredoxin-fold (KaiB(fs)). KaiB(fs) binds CikA, leading it to dephosphorylate phospho-RpaA.

In terms of biological role, key component of the KaiABC oscillator complex, which constitutes the main circadian regulator in cyanobacteria. Complex composition changes during the circadian cycle to control KaiC phosphorylation. KaiA stimulates KaiC autophosphorylation, while KaiB sequesters KaiA, leading to KaiC autodephosphorylation. Phospho-Ser-431 KaiC accumulation triggers binding of KaiB to form the KaiB(6):KaiC(6) complex, leading to changes in output regulators CikA and SasA. KaiB switches to a thioredoxin-like fold (KaiB(fs)) when bound to KaiC. KaiB(6):KaiC(6) formation exposes a site for KaiA binding that sequesters KaiA from KaiC, making the KaiC(6):KaiB(6):KaiA(12) complex that results in KaiC autodephosphorylation. Its function is as follows. A metamorphic protein which reversibly switches between an inactive tetrameric fold and a rare, thioredoxin-like monomeric fold (KaiB(fs)). KaiB(fs) binds phospho-KaiC, KaiA and CikA. KaiA and CikA compete for binding to KaiB(fs), and KaiB(fs) and SasA compete for binding to KaiC, thus the clock oscillator and output signal pathway are tightly coupled. The sequence is that of Circadian clock oscillator protein KaiB from Nostoc sp. (strain PCC 7120 / SAG 25.82 / UTEX 2576).